Reading from the N-terminus, the 657-residue chain is Threonine--tRNA ligase (657 aa).

The TGS domain occupies 1-62; that stretch reads MALDITFPDG…AHSGQLQIMT (62 aa). Residues 240-538 are catalytic; the sequence is DHRVIGRDLD…LTEIYKGAFP (299 aa). Zn(2+) contacts are provided by Cys-334, His-385, and His-515.

It belongs to the class-II aminoacyl-tRNA synthetase family. As to quaternary structure, homodimer. Requires Zn(2+) as cofactor.

The protein localises to the cytoplasm. The enzyme catalyses tRNA(Thr) + L-threonine + ATP = L-threonyl-tRNA(Thr) + AMP + diphosphate + H(+). Its function is as follows. Catalyzes the attachment of threonine to tRNA(Thr) in a two-step reaction: L-threonine is first activated by ATP to form Thr-AMP and then transferred to the acceptor end of tRNA(Thr). Also edits incorrectly charged L-seryl-tRNA(Thr). This chain is Threonine--tRNA ligase, found in Lacticaseibacillus paracasei (strain ATCC 334 / BCRC 17002 / CCUG 31169 / CIP 107868 / KCTC 3260 / NRRL B-441) (Lactobacillus paracasei).